The following is a 202-amino-acid chain: Small ribosomal subunit protein uS4c (202 aa).

The S4 RNA-binding domain maps to 90–153; that stretch reads MRLDNIIFRL…KSQAIISKNI (64 aa).

This sequence belongs to the universal ribosomal protein uS4 family. In terms of assembly, part of the 30S ribosomal subunit. Contacts protein S5. The interaction surface between S4 and S5 is involved in control of translational fidelity.

The protein resides in the plastid. Its subcellular location is the chloroplast. One of the primary rRNA binding proteins, it binds directly to 16S rRNA where it nucleates assembly of the body of the 30S subunit. Functionally, with S5 and S12 plays an important role in translational accuracy. In Splachnum sphaericum (Pinkstink dung moss), this protein is Small ribosomal subunit protein uS4c (rps4).